We begin with the raw amino-acid sequence, 502 residues long: Glutamate dehydrogenase, mitochondrial (502 aa).

96–98 (HHR) provides a ligand contact to NAD(+). Substrate contacts are provided by lysine 102 and lysine 126. Residue aspartate 131 coordinates NAD(+). Lysine 138 is a catalytic residue. Substrate is bound at residue serine 394.

It belongs to the Glu/Leu/Phe/Val dehydrogenases family. As to quaternary structure, homohexamer.

The protein localises to the mitochondrion matrix. The enzyme catalyses L-glutamate + NAD(+) + H2O = 2-oxoglutarate + NH4(+) + NADH + H(+). It catalyses the reaction L-glutamate + NADP(+) + H2O = 2-oxoglutarate + NH4(+) + NADPH + H(+). Subject to allosteric regulation. Activated by AMP and ADP. This Dictyostelium discoideum (Social amoeba) protein is Glutamate dehydrogenase, mitochondrial (gluD).